Here is a 309-residue protein sequence, read N- to C-terminus: Probable manganese-dependent inorganic pyrophosphatase (309 aa).

Mn(2+) contacts are provided by histidine 9, aspartate 13, aspartate 15, aspartate 75, histidine 97, and aspartate 149.

This sequence belongs to the PPase class C family. Requires Mn(2+) as cofactor.

It localises to the cytoplasm. The enzyme catalyses diphosphate + H2O = 2 phosphate + H(+). In Bacillus cereus (strain B4264), this protein is Probable manganese-dependent inorganic pyrophosphatase.